Here is a 427-residue protein sequence, read N- to C-terminus: NADPH-dependent stearoyl-CoA 9-desaturase (427 aa).

His-90, His-94, His-125, His-129, His-130, His-304, His-308, and His-309 together coordinate Fe cation.

It belongs to the fatty acid desaturase type 1 family. As to quaternary structure, interacts with the electron transfer protein Rv3230c to form a functional acyl-CoA desaturase complex. The cofactor is Fe(2+). In terms of processing, is rapidly degraded by a mycobacterial protein degradation system that specifically targets the residues LAA at the C-terminus, leading to a post-translational proteolytic regulation of DesA3 essential activity.

Its subcellular location is the cell membrane. The enzyme catalyses octadecanoyl-CoA + NADPH + O2 + H(+) = (9Z)-octadecenoyl-CoA + NADP(+) + 2 H2O. The protein operates within lipid metabolism; fatty acid metabolism. Its function is as follows. Is likely involved in the aerobic desaturation system responsible for the synthesis of oleic acid from stearoyl-CoA; oleic acid is a precursor of mycobacterial membrane phospholipids and triglycerides. Catalyzes the conversion of stearoyl-CoA to oleoyl-CoA by introduction of a cis double bond between carbons 9 and 10 of the acyl chain. Requires the electron transfer partner Rv3230c to pass two electrons from NADPH to its active site diiron center. Is also able to catalyze the 9-desaturation of palmitoyl-CoA to palmitoleoyl-CoA. This Mycobacterium tuberculosis (strain CDC 1551 / Oshkosh) protein is NADPH-dependent stearoyl-CoA 9-desaturase (desA3).